A 128-amino-acid chain; its full sequence is Large ribosomal subunit protein eL22 (128 aa).

Phosphothreonine is present on T62. Residue S66 is modified to Phosphoserine. K69 is modified (N6-succinyllysine).

The protein belongs to the eukaryotic ribosomal protein eL22 family. In terms of assembly, component of the large ribosomal subunit.

It localises to the cytoplasm. Functionally, component of the large ribosomal subunit. The ribosome is a large ribonucleoprotein complex responsible for the synthesis of proteins in the cell. The polypeptide is Large ribosomal subunit protein eL22 (Rpl22) (Rattus norvegicus (Rat)).